A 338-amino-acid chain; its full sequence is Glyceraldehyde-3-phosphate dehydrogenase (338 aa).

NAD(+) contacts are provided by residues 11–12 and Gly-111; that span reads TI. 140–142 provides a ligand contact to D-glyceraldehyde 3-phosphate; the sequence is SCN. The Nucleophile role is filled by Cys-141. Arg-169 is an NAD(+) binding site. The interval 170 to 195 is disordered; the sequence is GSDPSEVKKGPINSIVPNPPKVPSHH. 195–196 is a D-glyceraldehyde 3-phosphate binding site; the sequence is HG. Gln-302 lines the NAD(+) pocket.

This sequence belongs to the glyceraldehyde-3-phosphate dehydrogenase family. In terms of assembly, homotetramer.

It localises to the cytoplasm. It catalyses the reaction D-glyceraldehyde 3-phosphate + phosphate + NADP(+) = (2R)-3-phospho-glyceroyl phosphate + NADPH + H(+). The enzyme catalyses D-glyceraldehyde 3-phosphate + phosphate + NAD(+) = (2R)-3-phospho-glyceroyl phosphate + NADH + H(+). Its pathway is carbohydrate degradation; glycolysis; pyruvate from D-glyceraldehyde 3-phosphate: step 1/5. In Methanobrevibacter smithii (strain ATCC 35061 / DSM 861 / OCM 144 / PS), this protein is Glyceraldehyde-3-phosphate dehydrogenase.